Consider the following 139-residue polypeptide: S-adenosylmethionine decarboxylase proenzyme (139 aa).

The Schiff-base intermediate with substrate; via pyruvic acid role is filled by serine 63. Position 63 is a pyruvic acid (Ser); by autocatalysis (serine 63). Histidine 68 (proton acceptor; for processing activity) is an active-site residue. Cysteine 83 serves as the catalytic Proton donor; for catalytic activity.

The protein belongs to the prokaryotic AdoMetDC family. Type 1 subfamily. As to quaternary structure, heterotetramer of two alpha and two beta chains arranged as a dimer of alpha/beta heterodimers. Requires pyruvate as cofactor. In terms of processing, is synthesized initially as an inactive proenzyme. Formation of the active enzyme involves a self-maturation process in which the active site pyruvoyl group is generated from an internal serine residue via an autocatalytic post-translational modification. Two non-identical subunits are generated from the proenzyme in this reaction, and the pyruvate is formed at the N-terminus of the alpha chain, which is derived from the carboxyl end of the proenzyme. The post-translation cleavage follows an unusual pathway, termed non-hydrolytic serinolysis, in which the side chain hydroxyl group of the serine supplies its oxygen atom to form the C-terminus of the beta chain, while the remainder of the serine residue undergoes an oxidative deamination to produce ammonia and the pyruvoyl group blocking the N-terminus of the alpha chain.

It catalyses the reaction S-adenosyl-L-methionine + H(+) = S-adenosyl 3-(methylsulfanyl)propylamine + CO2. It functions in the pathway amine and polyamine biosynthesis; S-adenosylmethioninamine biosynthesis; S-adenosylmethioninamine from S-adenosyl-L-methionine: step 1/1. Its function is as follows. Catalyzes the decarboxylation of S-adenosylmethionine to S-adenosylmethioninamine (dcAdoMet), the propylamine donor required for the synthesis of the polyamines spermine and spermidine from the diamine putrescine. In Pyrococcus horikoshii (strain ATCC 700860 / DSM 12428 / JCM 9974 / NBRC 100139 / OT-3), this protein is S-adenosylmethionine decarboxylase proenzyme.